The following is a 564-amino-acid chain: MFSRSDREVDDLAGNMSHLGFYDLNIPKPTSPQAQYRPARKSENGRLTPGLPRSYKPCDSDDQDTFKNRISLNHSPKKLPKDFHERASQSKTQRVVNVCQLYFLDYYCDMFDYVISRRQRTKQVLRYLEQQRSVKNVSNKVLNEEWALYLQREHEVLRKRRLKPKHKDFQILTQVGQGGYGQVYLAKKKDSDEICALKILNKKLLFKLNETNHVLTERDILTTTRSDWLVKLLYAFQDPESLYLAMEFVPGGDFRTLLINTRILKSGHARFYISEMFCAVNALHELGYTHRDLKPENFLIDATGHIKLTDFGLAAGTVSNERIESMKIRLEEVKNLEFPAFTERSIEDRRKIYHNMRKTEINYANSMVGSPDYMALEVLEGKKYDFTVDYWSLGCMLFESLVGYTPFSGSSTNETYENLRYWKKTLRRPRTEDRRAAFSDRTWDLITRLIADPINRVRSFEQVRKMSYFAEINFETLRTSSPPFIPQLDDETDAGYFDDFTNEEDMAKYADVFKRQNKLSAMVDDSAVDSKLVGFTFRHRDGKQGSSGILYNGSEHSDPFSTFY.

Phosphoserine is present on Ser-17. The tract at residues 24–62 (LNIPKPTSPQAQYRPARKSENGRLTPGLPRSYKPCDSDD) is disordered. The Protein kinase domain maps to 169 to 469 (FQILTQVGQG…FEQVRKMSYF (301 aa)). ATP is bound by residues 175-183 (VGQGGYGQV) and Lys-198. The Proton acceptor role is filled by Asp-292. Ser-366 is modified (phosphoserine). Residues 470 to 547 (AEINFETLRT…RHRDGKQGSS (78 aa)) form the AGC-kinase C-terminal domain. The residue at position 536 (Thr-536) is a Phosphothreonine.

Belongs to the protein kinase superfamily. Ser/Thr protein kinase family.

The catalysed reaction is L-seryl-[protein] + ATP = O-phospho-L-seryl-[protein] + ADP + H(+). It catalyses the reaction L-threonyl-[protein] + ATP = O-phospho-L-threonyl-[protein] + ADP + H(+). In terms of biological role, is probably a Ser/Thr-protein kinase that may function in initiation of DNA synthesis and also in late nuclear division. The protein is Serine/threonine-protein kinase DBF20 (DBF20) of Saccharomyces cerevisiae (strain ATCC 204508 / S288c) (Baker's yeast).